The following is a 432-amino-acid chain: Serine--tRNA ligase (432 aa).

Position 238 to 240 (238 to 240 (TAE)) interacts with L-serine. ATP is bound at residue 269–271 (RSE). L-serine is bound at residue Glu292. 356–359 (EVSS) lines the ATP pocket. Ser392 serves as a coordination point for L-serine.

This sequence belongs to the class-II aminoacyl-tRNA synthetase family. Type-1 seryl-tRNA synthetase subfamily. Homodimer. The tRNA molecule binds across the dimer.

It is found in the cytoplasm. The enzyme catalyses tRNA(Ser) + L-serine + ATP = L-seryl-tRNA(Ser) + AMP + diphosphate + H(+). The catalysed reaction is tRNA(Sec) + L-serine + ATP = L-seryl-tRNA(Sec) + AMP + diphosphate + H(+). Its pathway is aminoacyl-tRNA biosynthesis; selenocysteinyl-tRNA(Sec) biosynthesis; L-seryl-tRNA(Sec) from L-serine and tRNA(Sec): step 1/1. Its function is as follows. Catalyzes the attachment of serine to tRNA(Ser). Is also able to aminoacylate tRNA(Sec) with serine, to form the misacylated tRNA L-seryl-tRNA(Sec), which will be further converted into selenocysteinyl-tRNA(Sec). The protein is Serine--tRNA ligase of Buchnera aphidicola subsp. Baizongia pistaciae (strain Bp).